Reading from the N-terminus, the 216-residue chain is Octanoyltransferase (216 aa).

The 175-residue stretch at 30–204 (KNNINEIWLL…NCKKFLMMNN (175 aa)) folds into the BPL/LPL catalytic domain. Substrate-binding positions include 68–75 (RGGHMTFH), 135–137 (SIG), and 148–150 (GLA). Cysteine 166 serves as the catalytic Acyl-thioester intermediate.

The protein belongs to the LipB family.

It is found in the cytoplasm. The catalysed reaction is octanoyl-[ACP] + L-lysyl-[protein] = N(6)-octanoyl-L-lysyl-[protein] + holo-[ACP] + H(+). The protein operates within protein modification; protein lipoylation via endogenous pathway; protein N(6)-(lipoyl)lysine from octanoyl-[acyl-carrier-protein]: step 1/2. Functionally, catalyzes the transfer of endogenously produced octanoic acid from octanoyl-acyl-carrier-protein onto the lipoyl domains of lipoate-dependent enzymes. Lipoyl-ACP can also act as a substrate although octanoyl-ACP is likely to be the physiological substrate. The sequence is that of Octanoyltransferase from Wigglesworthia glossinidia brevipalpis.